Reading from the N-terminus, the 587-residue chain is 2-succinyl-5-enolpyruvyl-6-hydroxy-3-cyclohexene-1-carboxylate synthase (587 aa).

This sequence belongs to the TPP enzyme family. MenD subfamily. Homodimer. Mg(2+) is required as a cofactor. Mn(2+) serves as cofactor. Requires thiamine diphosphate as cofactor.

It carries out the reaction isochorismate + 2-oxoglutarate + H(+) = 5-enolpyruvoyl-6-hydroxy-2-succinyl-cyclohex-3-ene-1-carboxylate + CO2. Its pathway is quinol/quinone metabolism; 1,4-dihydroxy-2-naphthoate biosynthesis; 1,4-dihydroxy-2-naphthoate from chorismate: step 2/7. It functions in the pathway quinol/quinone metabolism; menaquinone biosynthesis. Functionally, catalyzes the thiamine diphosphate-dependent decarboxylation of 2-oxoglutarate and the subsequent addition of the resulting succinic semialdehyde-thiamine pyrophosphate anion to isochorismate to yield 2-succinyl-5-enolpyruvyl-6-hydroxy-3-cyclohexene-1-carboxylate (SEPHCHC). In Chloroflexus aurantiacus (strain ATCC 29366 / DSM 635 / J-10-fl), this protein is 2-succinyl-5-enolpyruvyl-6-hydroxy-3-cyclohexene-1-carboxylate synthase.